The sequence spans 438 residues: Battenin (438 aa).

Positions M1–L25 are disordered. Residues M1 to N37 are Cytoplasmic-facing. S12 and S14 each carry phosphoserine. Residues A38–A58 traverse the membrane as a helical segment. At A59–R127 the chain is on the lumenal side. 2 N-linked (GlcNAc...) asparagine glycosylation sites follow: N71 and N85. A helical membrane pass occupies residues V128 to V148. The Cytoplasmic segment spans residues G149–S151. The chain crosses the membrane as a helical span at residues L152–L172. At T173–S182 the chain is on the lumenal side. The helical transmembrane segment at W183–T203 threads the bilayer. Over Q204–V277 the chain is Cytoplasmic. Residues Q237–S268 form a disordered region. The Lysosomal targeting motif motif lies at E242–E244. The short motif at L253–I254 is the Lysosomal targeting motif. Required for AP1G1, AP2A2 and AP3D1 interaction element. Residues F278–I298 traverse the membrane as a helical segment. The Lumenal segment spans residues N299–W346. N310 is a glycosylation site (N-linked (GlcNAc...) asparagine). The helical transmembrane segment at A347 to F367 threads the bilayer. Residues L368–S438 lie on the Cytoplasmic side of the membrane. The Lysosomal targeting motif signature appears at M409–G419. C435 carries the post-translational modification Cysteine methyl ester. C435 carries S-farnesyl cysteine lipidation. The propeptide at Q436 to S438 is removed in mature form.

This sequence belongs to the battenin family. As to quaternary structure, interacts with DCTN1, KIF3A, RAB7A and RILP. Interacts with CLN5. In terms of processing, highly glycosylated. Farnesylation is important for trafficking to lysosomes.

It is found in the lysosome membrane. The protein resides in the late endosome. It localises to the lysosome. Its function is as follows. Mediates microtubule-dependent, anterograde transport connecting the Golgi network, endosomes, autophagosomes, lysosomes and plasma membrane, and participates in several cellular processes such as regulation of lysosomal pH, lysosome protein degradation, receptor-mediated endocytosis, autophagy, transport of proteins and lipids from the TGN, apoptosis and synaptic transmission. Facilitates the proteins transport from trans-Golgi network (TGN)-to other membrane compartments such as transport of microdomain-associated proteins to the plasma membrane, IGF2R transport to the lysosome where it regulates the CTSD release leading to regulation of CTSD maturation and thereby APP intracellular processing. Moreover regulates CTSD activity in response to osmotic stress. Also binds galactosylceramide and transports it from the trans Golgi to the rafts, which may have immediate and downstream effects on cell survival by modulating ceramide synthesis. At the plasma membrane, regulates actin-dependent events including filopodia formation, cell migration, and pinocytosis through ARF1-CDC42 pathway and also the cytoskeleton organization through interaction with MYH10 and fodrin leading to the regulation of the plasma membrane association of Na+, K+ ATPase complex. Regulates synaptic transmission in the amygdala, hippocampus, and cerebellum through regulation of synaptic vesicles density and their proximity to active zones leading to modulation of short-term plasticity and age-dependent anxious behavior, learning and memory. Regulates autophagic vacuoles (AVs) maturation by modulating the trafficking between endocytic and autophagolysosomal/lysosomal compartments, which involves vesicle fusion leading to regulation of degradation process. Also participates in cellular homeostasis of compounds such as, water, ions, amino acids, proteins and lipids in several tissue namely in brain and kidney through regulation of their transport and synthesis. This Macaca fascicularis (Crab-eating macaque) protein is Battenin.